The sequence spans 346 residues: MTHRFLEACRKQPVDRLPVWMMRQAGRYQPSYRAVRANVGFLELCRSPELIAQVTVAPIDEFGFDAAILFSDILVHLPAMGLDLSFEKGEKGKGDGGPKIANPVRTRADVDALKVPAPKKDLPYVLDGVRAIRAALRDRVPLIGFVGGPFTVASYAVEGGSQGFTRLKTMLYAEPRTAHALFEKLTQAAIVQIEEQIAAGAQAAQIFESWLGELDRADLEEFAFPYLARIAEAVKRTGVPSIFFSTGTTAHLEPISKLGYDVVSVDWRIPIDEARRRAPGVAIQGNMDSTVLLGPKEVAVERALSIVRAAGREPGYIFNLGHGIQPGTPTETVKAVVDAVHAFAWK.

Substrate-binding positions include 23 to 27, aspartate 72, tyrosine 155, serine 209, and histidine 322; that span reads RQAGR.

The protein belongs to the uroporphyrinogen decarboxylase family. Homodimer.

Its subcellular location is the cytoplasm. It catalyses the reaction uroporphyrinogen III + 4 H(+) = coproporphyrinogen III + 4 CO2. It functions in the pathway porphyrin-containing compound metabolism; protoporphyrin-IX biosynthesis; coproporphyrinogen-III from 5-aminolevulinate: step 4/4. In terms of biological role, catalyzes the decarboxylation of four acetate groups of uroporphyrinogen-III to yield coproporphyrinogen-III. This is Uroporphyrinogen decarboxylase from Anaeromyxobacter sp. (strain Fw109-5).